Here is a 262-residue protein sequence, read N- to C-terminus: Ribosomal RNA small subunit methyltransferase A (262 aa).

Positions 11, 13, 38, 60, 85, and 105 each coordinate S-adenosyl-L-methionine.

The protein belongs to the class I-like SAM-binding methyltransferase superfamily. rRNA adenine N(6)-methyltransferase family. RsmA subfamily.

It localises to the cytoplasm. The catalysed reaction is adenosine(1518)/adenosine(1519) in 16S rRNA + 4 S-adenosyl-L-methionine = N(6)-dimethyladenosine(1518)/N(6)-dimethyladenosine(1519) in 16S rRNA + 4 S-adenosyl-L-homocysteine + 4 H(+). Its function is as follows. Specifically dimethylates two adjacent adenosines (A1518 and A1519) in the loop of a conserved hairpin near the 3'-end of 16S rRNA in the 30S particle. May play a critical role in biogenesis of 30S subunits. The sequence is that of Ribosomal RNA small subunit methyltransferase A from Neorickettsia sennetsu (strain ATCC VR-367 / Miyayama) (Ehrlichia sennetsu).